Consider the following 115-residue polypeptide: Movement protein TGB2 (115 aa).

At 1 to 13 (MSAQGHRLTAPVN) the chain is on the cytoplasmic side. A helical transmembrane segment spans residues 14-34 (SEKVYIVLGLSFALISITFLL). At 35–74 (SRNNLPHVGDNIHSLPHGDAYRDGTKAILYNSPNFGSRTS) the chain is on the lumenal side. A helical transmembrane segment spans residues 75–95 (LNNSKNAAFAAVLLLSLLIYG). Residues 96–115 (SRCLSQRNHLCACGNNHSSN) are Cytoplasmic-facing.

This sequence belongs to the Tymovirales TGBp2 protein family.

It localises to the host endoplasmic reticulum membrane. Its function is as follows. Plays a role in viral cell-to-cell propagation, by facilitating genome transport to neighboring plant cells through plasmosdesmata,. The polypeptide is Movement protein TGB2 (Potato virus X (strain HB) (PVX)).